Consider the following 227-residue polypeptide: ATP-dependent Clp protease proteolytic subunit (227 aa).

Ser-123 functions as the Nucleophile in the catalytic mechanism. The active site involves His-148.

The protein belongs to the peptidase S14 family. Fourteen ClpP subunits assemble into 2 heptameric rings which stack back to back to give a disk-like structure with a central cavity, resembling the structure of eukaryotic proteasomes.

The protein resides in the cytoplasm. The enzyme catalyses Hydrolysis of proteins to small peptides in the presence of ATP and magnesium. alpha-casein is the usual test substrate. In the absence of ATP, only oligopeptides shorter than five residues are hydrolyzed (such as succinyl-Leu-Tyr-|-NHMec, and Leu-Tyr-Leu-|-Tyr-Trp, in which cleavage of the -Tyr-|-Leu- and -Tyr-|-Trp bonds also occurs).. Its function is as follows. Cleaves peptides in various proteins in a process that requires ATP hydrolysis. Has a chymotrypsin-like activity. Plays a major role in the degradation of misfolded proteins. This chain is ATP-dependent Clp protease proteolytic subunit, found in Chlorobium phaeobacteroides (strain DSM 266 / SMG 266 / 2430).